The following is a 216-amino-acid chain: PRA1 family protein B6 (216 aa).

Residue A2 is modified to N-acetylalanine. The next 5 helical transmembrane spans lie at L83–A103, L105–G125, L135–L155, L159–F179, and I186–I206.

It belongs to the PRA1 family. In terms of assembly, interacts with PRA1B1, PRA1B2, PRA1B3, PRA1B4, PRA1B5 and PRA1E. In terms of tissue distribution, expressed in hypocotyls, roots, lateral roots, lateral root caps, columella cells, leaves and stomata.

It is found in the endoplasmic reticulum membrane. In terms of biological role, may be involved in both secretory and endocytic intracellular trafficking in the endosomal/prevacuolar compartments. This is PRA1 family protein B6 (PRA1B6) from Arabidopsis thaliana (Mouse-ear cress).